The sequence spans 685 residues: A-type ATP synthase subunit I (685 aa).

7 helical membrane-spanning segments follow: residues 172 to 192 (VGGLAAVEASGGSVVVAVAVP), 348 to 368 (EIVPTVFLAITLPLTFALMFP), 394 to 414 (VIAVMGGASVVSGLLAGEVFG), 464 to 484 (LFMGAFMLSFGTFLGVVNGVI), 538 to 558 (LVLAGSVLGLAWMLLAGPIIY), 604 to 624 (MFVIYYLTVMIMQGGILADVV), and 626 to 646 (ALLYVGGNLAVAAMEGLLAFA).

It belongs to the V-ATPase 116 kDa subunit family. As to quaternary structure, has multiple subunits with at least A(3), B(3), C, D, E, F, H, I and proteolipid K(x).

Its subcellular location is the cell membrane. In terms of biological role, component of the A-type ATP synthase that produces ATP from ADP in the presence of a proton gradient across the membrane. The polypeptide is A-type ATP synthase subunit I (Aeropyrum pernix (strain ATCC 700893 / DSM 11879 / JCM 9820 / NBRC 100138 / K1)).